Reading from the N-terminus, the 149-residue chain is MQKLAVKIKKLENFHGDLPQYQSLGASGFDVRAQLAGPVVLNPGERAMIPTGLSFEIPLGYEIQARPRSGWAAKSGLTVLNTPGTIDADYRGEVKIIVINLGNEAVTINDQERCAQLVLAPVIQAQFELVNELSDTERGAGGFGSTGRA.

Residues Arg-68–Gly-70, Asn-81, Thr-85–Asp-87, and Lys-95 contribute to the substrate site.

This sequence belongs to the dUTPase family. Mg(2+) serves as cofactor.

The enzyme catalyses dUTP + H2O = dUMP + diphosphate + H(+). It functions in the pathway pyrimidine metabolism; dUMP biosynthesis; dUMP from dCTP (dUTP route): step 2/2. In terms of biological role, this enzyme is involved in nucleotide metabolism: it produces dUMP, the immediate precursor of thymidine nucleotides and it decreases the intracellular concentration of dUTP so that uracil cannot be incorporated into DNA. In Bdellovibrio bacteriovorus (strain ATCC 15356 / DSM 50701 / NCIMB 9529 / HD100), this protein is Deoxyuridine 5'-triphosphate nucleotidohydrolase.